Reading from the N-terminus, the 477-residue chain is MQVLHVCSEMFPLLKTGGLADVIGALPAAQIAEGIDTRVLLPAFPDIRRGVVDAQVVTRRDTFAGRITLLYGHFNGVGIYLIDAPHLYDRPGSPYHDTNQHAYPDNVLRFALLGWVGSEMASGLDPFWRPDVVHAHDWHAGLTPAYLAARGRPAKSVFTVHNLAYQGMFYSWHMNDIELPWSFYNMHGLEFNGQISFLKAGLYYADHITAVSPTYAREITEPQYAYGMEGLLRQRHHEGRLSGILNGVDDGIWSPQNDLLLPMRYDRDTLEEKAENKRQLQIAMGLKVDDKAPLFAVVSRLTSQKGLDLVLEALPGLLEQGGQLALLGAGDPVLQEGFLAAAAEHPGKVGVQIGYHEAFSHRIMGGADVILVPSRFEPCGLTQLYGLKYGTLPLVRRTGGLADTVADSSLENLADGLATGFVFEDSNALSLLRAIRRAFVLWSRPSLWRYVQRQAMNMDFSWQVAANSYRELYQRLM.

An ADP-alpha-D-glucose-binding site is contributed by K15.

This sequence belongs to the glycosyltransferase 1 family. Bacterial/plant glycogen synthase subfamily.

The enzyme catalyses [(1-&gt;4)-alpha-D-glucosyl](n) + ADP-alpha-D-glucose = [(1-&gt;4)-alpha-D-glucosyl](n+1) + ADP + H(+). It participates in glycan biosynthesis; glycogen biosynthesis. In terms of biological role, synthesizes alpha-1,4-glucan chains using ADP-glucose. The chain is Glycogen synthase from Klebsiella pneumoniae subsp. pneumoniae (strain ATCC 700721 / MGH 78578).